We begin with the raw amino-acid sequence, 461 residues long: MLKIFNTLTRQKEEFKPIHAGEVGMYVCGITVYDLCHIGHGRTFVAFDVVARYLRFLGYKLKYVRNITDIDDKIIKRANENGESFVALVDRMIAEMHKDFDALNILRPDMEPRATHHIAEIIELTEQLIAKGHAYVADNGDVMFDVPTDPTYGVLSRQDLDQLQAGARVDVVDDKRNPMDFVLWKMSKEGEPSWPSPWGAGRPGWHIECSAMNCKQLGNHFDIHGGGSDLMFPHHENEIAQSTCAHDGQYVNYWMHSGMVMVDREKMSKSLGNFFTVRDVLKYYDAETVRYFLMSGHYRSQLNYSEENLKQARAALERLYTALRGTDKTVAPAGGEAFEARFIEAMDDDFNTPEAYSVLFDMAREVNRLKAEDMAAANAMASHLRKLSAVLGLLEQEPEAFLQSGAQADDSEVAEIEALIQQRLDARKAKDWAAADAARDRLNEMGIVLEDGPQGTTWRRK.

Cys-28 is a binding site for Zn(2+). The 'HIGH' region motif lies at 30 to 40; that stretch reads ITVYDLCHIGH. Zn(2+) is bound by residues Cys-209, His-234, and Glu-238. Positions 266–270 match the 'KMSKS' region motif; the sequence is KMSKS. ATP is bound at residue Lys-269.

This sequence belongs to the class-I aminoacyl-tRNA synthetase family. Monomer. Zn(2+) serves as cofactor.

Its subcellular location is the cytoplasm. The catalysed reaction is tRNA(Cys) + L-cysteine + ATP = L-cysteinyl-tRNA(Cys) + AMP + diphosphate. The polypeptide is Cysteine--tRNA ligase (Escherichia coli (strain 55989 / EAEC)).